The primary structure comprises 1003 residues: Glycine--tRNA ligase (1003 aa).

A glycine--tRNA ligase alpha subunit region spans residues 1 to 310 (MSSQPLTLQA…VTPKKIPTIC (310 aa)). A glycine--tRNA ligase beta subunit region spans residues 311–1003 (QPEDFLLEIG…CFGFYAWDVL (693 aa)).

Belongs to the class-II aminoacyl-tRNA synthetase family.

It is found in the cytoplasm. The enzyme catalyses tRNA(Gly) + glycine + ATP = glycyl-tRNA(Gly) + AMP + diphosphate. This chain is Glycine--tRNA ligase (glyQS), found in Chlamydia trachomatis serovar L2 (strain ATCC VR-902B / DSM 19102 / 434/Bu).